Here is a 141-residue protein sequence, read N- to C-terminus: Small ribosomal subunit protein uS12 (141 aa).

It belongs to the universal ribosomal protein uS12 family. In terms of assembly, part of the 30S ribosomal subunit.

In terms of biological role, with S4 and S5 plays an important role in translational accuracy. Located at the interface of the 30S and 50S subunits. The protein is Small ribosomal subunit protein uS12 of Methanosphaera stadtmanae (strain ATCC 43021 / DSM 3091 / JCM 11832 / MCB-3).